Here is a 786-residue protein sequence, read N- to C-terminus: Myosin light chain kinase 3 (786 aa).

Ser-155 carries the post-translational modification Phosphoserine. Disordered stretches follow at residues Glu-233 to Thr-258, Arg-279 to Asp-315, and Glu-333 to Val-443. Residues Arg-279 to Pro-293 show a composition bias toward polar residues. 2 positions are modified to phosphoserine: Ser-341 and Ser-422. Positions Val-482–Leu-737 constitute a Protein kinase domain. ATP is bound by residues Leu-488 to Val-496 and Lys-511. Residue Asp-603 is the Proton acceptor of the active site.

This sequence belongs to the protein kinase superfamily. CAMK Ser/Thr protein kinase family. It depends on Mg(2+) as a cofactor. In terms of processing, phosphorylated on serine residues. As to expression, expressed in cardiomyocytes (at protein level). Up-regulated in heart after experimental myocardial infarction at the mRNA level.

Its subcellular location is the cytoplasm. The catalysed reaction is L-seryl-[myosin light chain] + ATP = O-phospho-L-seryl-[myosin light chain] + ADP + H(+). The enzyme catalyses L-threonyl-[myosin light chain] + ATP = O-phospho-L-threonyl-[myosin light chain] + ADP + H(+). In terms of biological role, calmodulin-dependent kinase that phosphorylates MYL2 in vitro. Promotes sarcomere formation in cardiomyocytes. Increases cardiomyocyte contractility. This Rattus norvegicus (Rat) protein is Myosin light chain kinase 3 (Mylk3).